The primary structure comprises 127 residues: Large ribosomal subunit protein eL22x (127 aa).

The protein belongs to the eukaryotic ribosomal protein eL22 family.

This Arabidopsis thaliana (Mouse-ear cress) protein is Large ribosomal subunit protein eL22x (RPL22A).